The chain runs to 31 residues: Conotoxin Cltx-2 (31 aa).

4-hydroxyproline is present on residues Pro-6 and Pro-31.

Post-translationally, contains 4 disulfide bonds. Expressed by the venom duct.

Its subcellular location is the secreted. The chain is Conotoxin Cltx-2 from Californiconus californicus (California cone).